Consider the following 292-residue polypeptide: Acetyl-coenzyme A carboxylase carboxyl transferase subunit beta (292 aa).

The 264-residue stretch at 29 to 292 folds into the CoA carboxyltransferase N-terminal domain; that stretch reads LWSKCPECGQ…HGCLQGSAAV (264 aa). Residues C33, C36, C52, and C55 each coordinate Zn(2+). The C4-type zinc finger occupies 33 to 55; sequence CPECGQVVYRKDLLANASVCSNC.

This sequence belongs to the AccD/PCCB family. As to quaternary structure, acetyl-CoA carboxylase is a heterohexamer composed of biotin carboxyl carrier protein (AccB), biotin carboxylase (AccC) and two subunits each of ACCase subunit alpha (AccA) and ACCase subunit beta (AccD). Zn(2+) is required as a cofactor.

It is found in the cytoplasm. It catalyses the reaction N(6)-carboxybiotinyl-L-lysyl-[protein] + acetyl-CoA = N(6)-biotinyl-L-lysyl-[protein] + malonyl-CoA. It functions in the pathway lipid metabolism; malonyl-CoA biosynthesis; malonyl-CoA from acetyl-CoA: step 1/1. In terms of biological role, component of the acetyl coenzyme A carboxylase (ACC) complex. Biotin carboxylase (BC) catalyzes the carboxylation of biotin on its carrier protein (BCCP) and then the CO(2) group is transferred by the transcarboxylase to acetyl-CoA to form malonyl-CoA. The protein is Acetyl-coenzyme A carboxylase carboxyl transferase subunit beta of Synechococcus sp. (strain WH7803).